The sequence spans 715 residues: Fatty acid oxidation complex subunit alpha (715 aa).

Residues 1–190 are enoyl-CoA hydratase/isomerase; it reads MIYEGKAITV…KVGAVDAVVA (190 aa). Aspartate 297 is a binding site for substrate. The interval 312 to 715 is 3-hydroxyacyl-CoA dehydrogenase; it reads KDVKQAAVLG…MAKNGQSFFG (404 aa). Residues methionine 325, aspartate 344, 401–403, lysine 408, and serine 430 contribute to the NAD(+) site; that span reads VVE. Catalysis depends on histidine 451, which acts as the For 3-hydroxyacyl-CoA dehydrogenase activity. Residue asparagine 454 coordinates NAD(+). Substrate-binding residues include asparagine 501 and tyrosine 660.

This sequence in the N-terminal section; belongs to the enoyl-CoA hydratase/isomerase family. The protein in the C-terminal section; belongs to the 3-hydroxyacyl-CoA dehydrogenase family. In terms of assembly, heterotetramer of two alpha chains (FadB) and two beta chains (FadA).

The enzyme catalyses a (3S)-3-hydroxyacyl-CoA + NAD(+) = a 3-oxoacyl-CoA + NADH + H(+). It carries out the reaction a (3S)-3-hydroxyacyl-CoA = a (2E)-enoyl-CoA + H2O. It catalyses the reaction a 4-saturated-(3S)-3-hydroxyacyl-CoA = a (3E)-enoyl-CoA + H2O. The catalysed reaction is (3S)-3-hydroxybutanoyl-CoA = (3R)-3-hydroxybutanoyl-CoA. The enzyme catalyses a (3Z)-enoyl-CoA = a 4-saturated (2E)-enoyl-CoA. It carries out the reaction a (3E)-enoyl-CoA = a 4-saturated (2E)-enoyl-CoA. Its pathway is lipid metabolism; fatty acid beta-oxidation. Involved in the aerobic and anaerobic degradation of long-chain fatty acids via beta-oxidation cycle. Catalyzes the formation of 3-oxoacyl-CoA from enoyl-CoA via L-3-hydroxyacyl-CoA. It can also use D-3-hydroxyacyl-CoA and cis-3-enoyl-CoA as substrate. This Pseudomonas fluorescens (strain ATCC BAA-477 / NRRL B-23932 / Pf-5) protein is Fatty acid oxidation complex subunit alpha.